The following is a 417-amino-acid chain: Gamma-glutamyl phosphate reductase (417 aa).

It belongs to the gamma-glutamyl phosphate reductase family.

The protein resides in the cytoplasm. The catalysed reaction is L-glutamate 5-semialdehyde + phosphate + NADP(+) = L-glutamyl 5-phosphate + NADPH + H(+). It functions in the pathway amino-acid biosynthesis; L-proline biosynthesis; L-glutamate 5-semialdehyde from L-glutamate: step 2/2. Functionally, catalyzes the NADPH-dependent reduction of L-glutamate 5-phosphate into L-glutamate 5-semialdehyde and phosphate. The product spontaneously undergoes cyclization to form 1-pyrroline-5-carboxylate. The sequence is that of Gamma-glutamyl phosphate reductase from Escherichia coli O45:K1 (strain S88 / ExPEC).